Reading from the N-terminus, the 102-residue chain is DLQVLKPEPELIYGDLRGSVTFDCALGQEMANVAKFLCQLKNGKTCNVVINTLGKKAQDFEGRILLTPKENSHFSVHITGLRKEDAGHYLCGXHPDGEPKEG.

As to quaternary structure, interacts (mainly via CDR1-like domain) with dimeric IgA. Interacts (mainly via CDR2-like domain) with pentameric IgM. Either free or part of the secretory IgA (sIgA) complex that consists of two, four or five IgA monomers, and two additional non-Ig polypeptides, namely the JCHAIN and the secretory component (the proteolytic product of PIGR). Free secretory component interacts with bacterial antigens toxA of C.difficile and eaeA of E.coli. In terms of processing, N-glycosylated. N-glycosylation is required for anchoring IgA molecules to mucus, but is not necessary for Ig binding.

Its subcellular location is the cell membrane. It localises to the secreted. Mediates selective transcytosis of polymeric IgA and IgM across mucosal epithelial cells. Binds polymeric IgA and IgM at the basolateral surface of epithelial cells. The complex is then transported across the cell to be secreted at the apical surface. During this process, a cleavage occurs that separates the extracellular (known as the secretory component) from the transmembrane segment. Through its N-linked glycans ensures anchoring of secretory IgA (sIgA) molecules to mucus lining the epithelial surface to neutralize extracellular pathogens. On its own (free form) may act as a non-specific microbial scavenger to prevent pathogen interaction with epithelial cells. This Sus scrofa (Pig) protein is Polymeric immunoglobulin receptor (PIGR).